The sequence spans 330 residues: Pantothenate kinase (330 aa).

Residue 108–115 coordinates ATP; the sequence is GSVAVGKS.

Belongs to the prokaryotic pantothenate kinase family.

It localises to the cytoplasm. The enzyme catalyses (R)-pantothenate + ATP = (R)-4'-phosphopantothenate + ADP + H(+). It functions in the pathway cofactor biosynthesis; coenzyme A biosynthesis; CoA from (R)-pantothenate: step 1/5. In Allorhizobium ampelinum (strain ATCC BAA-846 / DSM 112012 / S4) (Agrobacterium vitis (strain S4)), this protein is Pantothenate kinase.